The following is a 337-amino-acid chain: Junctional sarcoplasmic reticulum protein 1 (337 aa).

Residues 1–84 (MATRAMEELD…EKEPVSKVTS (84 aa)) are mediates interaction with CACNA1S. Disordered regions lie at residues 23-125 (SALA…ELPW) and 159-337 (EAPA…KGRD). 2 stretches are compositionally biased toward basic and acidic residues: residues 49–59 (SRSHDSQERVT) and 69–79 (TKPKKMEKEPV). Low complexity predominate over residues 165–180 (PESWASSSSSPKGPAS). Residues 199–213 (SKLEERVQIPRSEEA) are compositionally biased toward basic and acidic residues. Positions 214 to 225 (AEKDEWESEEAA) are enriched in acidic residues. 3 stretches are compositionally biased toward basic and acidic residues: residues 236–277 (GPKE…RGAR), 285–309 (RRWE…DRKR), and 316–325 (RRPDEEDRPL). The segment covering 326 to 337 (GRQKRRAGKGRD) has biased composition (basic residues).

Interacts with CACNA1S, CACNB1 and calsequestrin.

It localises to the sarcoplasmic reticulum membrane. Its subcellular location is the endoplasmic reticulum membrane. Functionally, involved in skeletal muscle excitation/contraction coupling (EC), probably acting as a regulator of the voltage-sensitive calcium channel CACNA1S. EC is a physiological process whereby an electrical signal (depolarization of the plasma membrane) is converted into a chemical signal, a calcium gradient, by the opening of ryanodine receptor calcium release channels. May regulate CACNA1S membrane targeting and activity. The polypeptide is Junctional sarcoplasmic reticulum protein 1 (JSRP1) (Bos taurus (Bovine)).